Reading from the N-terminus, the 322-residue chain is Acetylglutamate kinase (322 aa).

Substrate contacts are provided by residues Gly-89–Gly-90, Arg-111, and Asn-217.

This sequence belongs to the acetylglutamate kinase family. ArgB subfamily.

It localises to the cytoplasm. The enzyme catalyses N-acetyl-L-glutamate + ATP = N-acetyl-L-glutamyl 5-phosphate + ADP. It participates in amino-acid biosynthesis; L-arginine biosynthesis; N(2)-acetyl-L-ornithine from L-glutamate: step 2/4. Catalyzes the ATP-dependent phosphorylation of N-acetyl-L-glutamate. The polypeptide is Acetylglutamate kinase (Ehrlichia ruminantium (strain Gardel)).